Consider the following 139-residue polypeptide: UPF0310 protein RSal33209_2865 (139 aa).

The protein belongs to the UPF0310 family.

This Renibacterium salmoninarum (strain ATCC 33209 / DSM 20767 / JCM 11484 / NBRC 15589 / NCIMB 2235) protein is UPF0310 protein RSal33209_2865.